A 254-amino-acid chain; its full sequence is Polysaccharide deacetylase domain-containing protein ECU11_0510 (254 aa).

The 185-residue stretch at 26–210 folds into the NodB homology domain; the sequence is GMIAINFVDG…IGKDKGYRFV (185 aa).

The sequence is that of Polysaccharide deacetylase domain-containing protein ECU11_0510 from Encephalitozoon cuniculi (strain GB-M1) (Microsporidian parasite).